Consider the following 831-residue polypeptide: Glucan 1,3-beta-glucosidase D (831 aa).

A compositionally biased stretch (basic and acidic residues) spans methionine 1 to arginine 21. Disordered stretches follow at residues methionine 1–serine 246 and alanine 261–serine 288. Residues methionine 1–tryptophan 300 lie on the Cytoplasmic side of the membrane. A compositionally biased stretch (acidic residues) spans glutamate 32–aspartate 41. 3 stretches are compositionally biased toward basic and acidic residues: residues aspartate 42–tyrosine 70, glutamate 78–arginine 94, and aspartate 151–threonine 177. The segment covering aspartate 178–leucine 195 has biased composition (low complexity). 2 stretches are compositionally biased toward basic and acidic residues: residues alanine 197–alanine 216 and proline 275–aspartate 286. The chain crosses the membrane as a helical; Signal-anchor for type II membrane protein span at residues tryptophan 301–valine 321. Topologically, residues serine 322–tyrosine 831 are extracellular. Positions lysine 325–lysine 360 are disordered. A compositionally biased stretch (low complexity) spans aspartate 334–leucine 350. N-linked (GlcNAc...) asparagine glycosylation is found at asparagine 379, asparagine 396, and asparagine 547. Glutamate 598 functions as the Proton donor in the catalytic mechanism. Asparagine 611, asparagine 637, asparagine 670, and asparagine 690 each carry an N-linked (GlcNAc...) asparagine glycan. Catalysis depends on glutamate 703, which acts as the Nucleophile.

This sequence belongs to the glycosyl hydrolase 5 (cellulase A) family.

The protein localises to the cell membrane. The enzyme catalyses Successive hydrolysis of beta-D-glucose units from the non-reducing ends of (1-&gt;3)-beta-D-glucans, releasing alpha-glucose.. Glucosidase involved in the degradation of cellulosic biomass. Active on lichenan. This is Glucan 1,3-beta-glucosidase D (exgD) from Emericella nidulans (strain FGSC A4 / ATCC 38163 / CBS 112.46 / NRRL 194 / M139) (Aspergillus nidulans).